We begin with the raw amino-acid sequence, 93 residues long: Long neurotoxin 1 (93 aa).

The signal sequence occupies residues 1-21; that stretch reads MKTLLLTLVVVTIVCLDLGNS. 5 disulfides stabilise this stretch: cysteine 24–cysteine 42, cysteine 35–cysteine 63, cysteine 48–cysteine 52, cysteine 67–cysteine 78, and cysteine 79–cysteine 84.

It belongs to the three-finger toxin family. Long-chain subfamily. Type II alpha-neurotoxin sub-subfamily. Expressed by the venom gland.

It localises to the secreted. In terms of biological role, binds with high affinity to muscular (alpha-1/CHRNA1) and neuronal (alpha-7/CHRNA7) nicotinic acetylcholine receptor (nAChR) and inhibits acetylcholine from binding to the receptor, thereby impairing neuromuscular and neuronal transmission. The polypeptide is Long neurotoxin 1 (Tropidechis carinatus (Australian rough-scaled snake)).